Reading from the N-terminus, the 84-residue chain is Hepcidin (84 aa).

The first 24 residues, 1–24 (MALSSQIWAACLLLLLLLASLTSG), serve as a signal peptide directing secretion. The propeptide occupies 25–54 (SVFPQQTGQLAELQPQDRAGARAGWTPMLQ). 3 disulfides stabilise this stretch: Cys-69/Cys-72, Cys-70/Cys-78, and Cys-73/Cys-81.

It belongs to the hepcidin family. Interacts with SLC40A1; this interaction promotes SLC40A1 rapid ubiquitination.

It is found in the secreted. Liver-produced hormone that constitutes the main circulating regulator of iron absorption and distribution across tissues. Acts by promoting endocytosis and degradation of ferroportin/SLC40A1, leading to the retention of iron in iron-exporting cells and decreased flow of iron into plasma. Controls the major flows of iron into plasma: absorption of dietary iron in the intestine, recycling of iron by macrophages, which phagocytose old erythrocytes and other cells, and mobilization of stored iron from hepatocytes. Its function is as follows. Has strong antimicrobial activity against E.coli ML35P N.cinerea and weaker against S.epidermidis, S.aureus and group b streptococcus bacteria. Active against the fungus C.albicans. No activity against P.aeruginosa. In Pongo abelii (Sumatran orangutan), this protein is Hepcidin (HAMP).